The sequence spans 147 residues: Siroheme decarboxylase NirG subunit (147 aa).

It belongs to the Ahb/Nir family. Probably forms a complex composed of NirD, NirL, NirG and NirH. All proteins are required for the total conversion of siroheme to didecarboxysiroheme.

It carries out the reaction siroheme + 2 H(+) = 12,18-didecarboxysiroheme + 2 CO2. Its pathway is porphyrin-containing compound metabolism. Its function is as follows. Involved in heme d1 biosynthesis. Catalyzes the decarboxylation of siroheme into didecarboxysiroheme. The polypeptide is Siroheme decarboxylase NirG subunit (Pseudomonas aeruginosa (strain ATCC 15692 / DSM 22644 / CIP 104116 / JCM 14847 / LMG 12228 / 1C / PRS 101 / PAO1)).